A 453-amino-acid chain; its full sequence is Bifunctional protein GlmU (453 aa).

Residues 1 to 225 are pyrophosphorylase; that stretch reads MHAHVILAAG…AEEALGVNTR (225 aa). UDP-N-acetyl-alpha-D-glucosamine is bound by residues 7 to 10, Lys-21, Gln-72, and 77 to 78; these read LAAG and GT. Asp-102 contributes to the Mg(2+) binding site. The UDP-N-acetyl-alpha-D-glucosamine site is built by Gly-138, Glu-152, Asn-167, and Asn-223. A Mg(2+)-binding site is contributed by Asn-223. Residues 226-246 form a linker region; that stretch reads EELARVEGVLLRRLRAEWMGK. Positions 247 to 453 are N-acetyltransferase; sequence GVRMILPETI…GYALRKLGEG (207 aa). The UDP-N-acetyl-alpha-D-glucosamine site is built by Arg-329 and Lys-347. His-359 (proton acceptor) is an active-site residue. Tyr-362 and Asn-373 together coordinate UDP-N-acetyl-alpha-D-glucosamine. Acetyl-CoA is bound by residues Ala-376, 382–383, Ser-401, Ala-419, and Arg-436; that span reads NY.

In the N-terminal section; belongs to the N-acetylglucosamine-1-phosphate uridyltransferase family. It in the C-terminal section; belongs to the transferase hexapeptide repeat family. In terms of assembly, homotrimer. The cofactor is Mg(2+).

The protein localises to the cytoplasm. The enzyme catalyses alpha-D-glucosamine 1-phosphate + acetyl-CoA = N-acetyl-alpha-D-glucosamine 1-phosphate + CoA + H(+). It catalyses the reaction N-acetyl-alpha-D-glucosamine 1-phosphate + UTP + H(+) = UDP-N-acetyl-alpha-D-glucosamine + diphosphate. It participates in nucleotide-sugar biosynthesis; UDP-N-acetyl-alpha-D-glucosamine biosynthesis; N-acetyl-alpha-D-glucosamine 1-phosphate from alpha-D-glucosamine 6-phosphate (route II): step 2/2. Its pathway is nucleotide-sugar biosynthesis; UDP-N-acetyl-alpha-D-glucosamine biosynthesis; UDP-N-acetyl-alpha-D-glucosamine from N-acetyl-alpha-D-glucosamine 1-phosphate: step 1/1. The protein operates within bacterial outer membrane biogenesis; LPS lipid A biosynthesis. In terms of biological role, catalyzes the last two sequential reactions in the de novo biosynthetic pathway for UDP-N-acetylglucosamine (UDP-GlcNAc). The C-terminal domain catalyzes the transfer of acetyl group from acetyl coenzyme A to glucosamine-1-phosphate (GlcN-1-P) to produce N-acetylglucosamine-1-phosphate (GlcNAc-1-P), which is converted into UDP-GlcNAc by the transfer of uridine 5-monophosphate (from uridine 5-triphosphate), a reaction catalyzed by the N-terminal domain. This is Bifunctional protein GlmU from Thermus thermophilus (strain ATCC 27634 / DSM 579 / HB8).